The primary structure comprises 476 residues: Cytochrome P450 monooxygenase ppzE (476 aa).

C452 serves as a coordination point for heme.

This sequence belongs to the cytochrome P450 family. It depends on heme as a cofactor.

Its pathway is secondary metabolite biosynthesis. In terms of biological role, cytochrome P450 monooxygenase; part of the gene cluster that mediates the biosynthesis of pyrrolopyrazines, secondary metabolites showing insecticidal activity. The role of ppzE within the pathway has still to be determined. The single multifunctional NRPS ppzA is sufficient to produce peramine via condensation of 1-pyrroline-5-carboxylate and arginine, N-methylation of the alpha-amino group of arginine and reduction of the thioester and the cyclization to form an iminium ion resulting in release from the peptide synthetase. Deprotonation of this intermediate and oxidation of the pyrroline ring would give rise to peramine. In Epichloe species that produce only peramine, the peramine synthetase gene is not localized in a gene cluster, in contrast to Metarhizium species that contain additional pyrrolopyrazine biosynthesis genes. The 2-oxoglutarate-Fe(II) type oxidoreductase ppzC hydroxylates peramine to yield the newly identified compound 8-hydroxyperamine whereas ppzD converts L-proline into trans-4-hydroxy-L-proline, a precursor of peramine biosynthesis. This chain is Cytochrome P450 monooxygenase ppzE, found in Metarhizium majus (strain ARSEF 297).